The primary structure comprises 176 residues: Cytochrome b (176 aa).

Transmembrane regions (helical) follow at residues 33 to 53 (FGSLLGICLVLQISTGLFLAM), 77 to 98 (WVLRYLHANGASMFFICLYLHV), and 113 to 133 (WNVGVILLFATMATAFMGYVL). Heme b contacts are provided by H83 and H97.

Belongs to the cytochrome b family. As to quaternary structure, the cytochrome bc1 complex contains 11 subunits: 3 respiratory subunits (MT-CYB, CYC1 and UQCRFS1), 2 core proteins (UQCRC1 and UQCRC2) and 6 low-molecular weight proteins (UQCRH/QCR6, UQCRB/QCR7, UQCRQ/QCR8, UQCR10/QCR9, UQCR11/QCR10 and a cleavage product of UQCRFS1). This cytochrome bc1 complex then forms a dimer. The cofactor is heme b.

The protein localises to the mitochondrion inner membrane. Functionally, component of the ubiquinol-cytochrome c reductase complex (complex III or cytochrome b-c1 complex) that is part of the mitochondrial respiratory chain. The b-c1 complex mediates electron transfer from ubiquinol to cytochrome c. Contributes to the generation of a proton gradient across the mitochondrial membrane that is then used for ATP synthesis. The sequence is that of Cytochrome b (MT-CYB) from Corynorhinus rafinesquii (Rafinesque's big-eared bat).